A 261-amino-acid chain; its full sequence is WW domain-binding protein 2 (261 aa).

The region spanning 1–84 is the GRAM domain; the sequence is MALNKNHSEG…YLMKDCEIKQ (84 aa). Phosphotyrosine; by YES and SRC is present on Tyr-192. The PPxY motif 1 motif lies at 196 to 200; the sequence is PPPPY. A compositionally biased stretch (pro residues) spans 196 to 209; sequence PPPPYPGPMEPPVS. The tract at residues 196–261 is disordered; that stretch reads PPPPYPGPME…YYPPEDKKTQ (66 aa). Low complexity predominate over residues 218–230; the sequence is AAEAKAAEAAASA. A Phosphotyrosine; by YES and SRC modification is found at Tyr-231. The span at 245–254 shows a compositional bias: pro residues; that stretch reads SQPPPPPYYP. A PPxY motif 2 motif is present at residues 248–252; the sequence is PPPPY.

Binds to the WW domain of YAP1, WWP1 and WWP2. Interacts with NEDD4. Interacts with ESR1 and UBE3A. Phosphorylated in repsonse to EGF as well as estrogen and progesterone hormones. Tyr-192 and Tyr-231 are phosphorylated by YES and SRC inducing nuclear translocation. In terms of tissue distribution, ubiquitous.

The protein resides in the cytoplasm. Its subcellular location is the nucleus. In terms of biological role, acts as a transcriptional coactivator of estrogen and progesterone receptors (ESR1 and PGR) upon hormone activation. In presence of estrogen, binds to ESR1-responsive promoters. Synergizes with YAP1 to enhance PGR activity. Modulates expression of post-synaptic scaffolding proteins via regulation of ESR1, ESR2 and PGR. This Homo sapiens (Human) protein is WW domain-binding protein 2.